Here is a 798-residue protein sequence, read N- to C-terminus: Integrin beta-1-A (798 aa).

The signal sequence occupies residues 1 to 21 (MAHYPVFTVGLLTCLVLCINA). The Extracellular segment spans residues 22–727 (QQGGTECLKA…VKEPECPSGP (706 aa)). In terms of domain architecture, PSI spans 27–77 (ECLKANAKSCGECIQAGPNCGWCTKVDFLQEGEPTSARCDDLAALKSKGCP). Disulfide bonds link cysteine 28-cysteine 46, cysteine 36-cysteine 464, cysteine 39-cysteine 65, cysteine 49-cysteine 76, cysteine 206-cysteine 212, cysteine 260-cysteine 300, cysteine 400-cysteine 414, cysteine 434-cysteine 462, cysteine 466-cysteine 486, cysteine 477-cysteine 489, cysteine 491-cysteine 500, cysteine 502-cysteine 533, cysteine 516-cysteine 531, cysteine 525-cysteine 536, cysteine 538-cysteine 553, cysteine 555-cysteine 576, cysteine 560-cysteine 574, cysteine 568-cysteine 579, cysteine 581-cysteine 590, cysteine 592-cysteine 615, cysteine 599-cysteine 613, cysteine 607-cysteine 618, cysteine 620-cysteine 630, cysteine 633-cysteine 636, cysteine 640-cysteine 691, cysteine 646-cysteine 665, cysteine 649-cysteine 661, and cysteine 699-cysteine 723. Residues 76–106 (CPEDDIQNPRGRKQKLKDIPITSKGKGERMD) form a disordered region. Residues asparagine 109 and asparagine 131 are each glycosylated (N-linked (GlcNAc...) asparagine). Residues 139–377 (DYPIDLYYLM…QLIIDSYNSL (239 aa)) enclose the VWFA domain. Residues serine 151 and serine 153 each coordinate Mg(2+). Serine 153, aspartate 156, aspartate 157, and glutamate 188 together coordinate Ca(2+). N-linked (GlcNAc...) asparagine glycosylation is found at asparagine 211 and asparagine 223. Ca(2+)-binding residues include asparagine 243, aspartate 245, proline 247, and glutamate 248. Glutamate 248 is a Mg(2+) binding site. Residues asparagine 268 and asparagine 362 are each glycosylated (N-linked (GlcNAc...) asparagine). Asparagine 416 carries an N-linked (GlcNAc...) asparagine glycan. I-EGF domains follow at residues 466–501 (CQDK…KECE), 502–554 (CSTD…KYCE), 555–591 (CDNF…SACD), and 592–631 (CSED…PTCE). Asparagine 481 is a glycosylation site (N-linked (GlcNAc...) asparagine). A glycan (N-linked (GlcNAc...) asparagine) is linked at asparagine 520. Asparagine 584 is a glycosylation site (N-linked (GlcNAc...) asparagine). An N-linked (GlcNAc...) asparagine glycan is attached at asparagine 669. The chain crosses the membrane as a helical span at residues 728-751 (DIIPIVAGVVAGIVLIGLALLLIW). Topologically, residues 752-798 (KLLMIIHDRREFAKFEKEKMNAKWDTGENPIYKSAVTTVVNPKYEGK) are cytoplasmic. Tyrosine 783 carries the post-translational modification Phosphotyrosine.

This sequence belongs to the integrin beta chain family. As to quaternary structure, heterodimer of an alpha and a beta subunit.

It is found in the cell membrane. Its subcellular location is the cell projection. The protein resides in the invadopodium membrane. It localises to the ruffle membrane. The protein localises to the melanosome. It is found in the cleavage furrow. Its subcellular location is the lamellipodium. The protein resides in the ruffle. Its function is as follows. Beta integrins associate with alpha subunits to form receptor complexes that recognize the sequence R-G-D in a wide array of ligands. May be involved in osteoblast compaction. May play role in myoblast differentiation and fusion during skeletal myogenesis. The polypeptide is Integrin beta-1-A (itgb1-a) (Xenopus laevis (African clawed frog)).